A 365-amino-acid chain; its full sequence is NAD(P)H-quinone oxidoreductase subunit 1, chloroplastic (365 aa).

6 consecutive transmembrane segments (helical) span residues 32–52 (LFPI…IVWL), 98–118 (YLFS…YLII), 129–149 (LSIG…GLLM), 257–279 (LFYV…LYLG), 302–322 (VFGT…FLFI), and 338–358 (LLNL…LLTT).

Belongs to the complex I subunit 1 family. As to quaternary structure, NDH is composed of at least 16 different subunits, 5 of which are encoded in the nucleus.

Its subcellular location is the plastid. It is found in the chloroplast thylakoid membrane. It catalyses the reaction a plastoquinone + NADH + (n+1) H(+)(in) = a plastoquinol + NAD(+) + n H(+)(out). The catalysed reaction is a plastoquinone + NADPH + (n+1) H(+)(in) = a plastoquinol + NADP(+) + n H(+)(out). Functionally, NDH shuttles electrons from NAD(P)H:plastoquinone, via FMN and iron-sulfur (Fe-S) centers, to quinones in the photosynthetic chain and possibly in a chloroplast respiratory chain. The immediate electron acceptor for the enzyme in this species is believed to be plastoquinone. Couples the redox reaction to proton translocation, and thus conserves the redox energy in a proton gradient. This Spinacia oleracea (Spinach) protein is NAD(P)H-quinone oxidoreductase subunit 1, chloroplastic.